We begin with the raw amino-acid sequence, 723 residues long: Heme/hemopexin utilization protein C (723 aa).

Residues 1 to 21 (MRFSKLSLAITTTLVTANALA) form the signal peptide. Positions 36-147 (DPSRFAYTPE…LGGVVAMRTP (112 aa)) constitute a TBDR plug domain. A TBDR beta-barrel domain is found at 158 to 723 (KFGVKIRQGY…NAKISAVYSF (566 aa)). The TonB C-terminal box signature appears at 706–723 (SLMEGTGRNAKISAVYSF).

Belongs to the TonB-dependent receptor family.

The protein localises to the cell outer membrane. Required for utilization of free heme at low concentrations. This Haemophilus influenzae (strain ATCC 51907 / DSM 11121 / KW20 / Rd) protein is Heme/hemopexin utilization protein C (hxuC).